We begin with the raw amino-acid sequence, 127 residues long: Holo-[acyl-carrier-protein] synthase (127 aa).

Residues Asp-8 and Glu-59 each coordinate Mg(2+).

The protein belongs to the P-Pant transferase superfamily. AcpS family. The cofactor is Mg(2+).

Its subcellular location is the cytoplasm. The enzyme catalyses apo-[ACP] + CoA = holo-[ACP] + adenosine 3',5'-bisphosphate + H(+). Its function is as follows. Transfers the 4'-phosphopantetheine moiety from coenzyme A to a Ser of acyl-carrier-protein. The polypeptide is Holo-[acyl-carrier-protein] synthase (Rickettsia bellii (strain OSU 85-389)).